Here is a 408-residue protein sequence, read N- to C-terminus: Putative agmatinase 3 (408 aa).

Residues 1–21 (MKSVEWFTWGVFLLLSGFGEA) form the signal peptide. His198, Asp222, His224, Asp226, Asp319, and Asp321 together coordinate Mn(2+).

The protein belongs to the arginase family. The cofactor is Mn(2+).

The enzyme catalyses agmatine + H2O = urea + putrescine. In Schizosaccharomyces pombe (strain 972 / ATCC 24843) (Fission yeast), this protein is Putative agmatinase 3.